The following is a 190-amino-acid chain: MPPRPRFDRRAPVRELPNINERIKYPQLRVVDSDGKQLGVIDRLKALEIASQRELDLVLVSEKANPPVCRIMDYGKYKFEQEKKAKEARKKSHQTEVKEVKMRYKIDKHDYDVRIGQATKFLKSGDKVKCTVIFRGREIQHSNLAETLLLKMANDLEEQSEVQQKPKREGRNMIMFLSPRKTPLIKKDDG.

It belongs to the IF-3 family. In terms of assembly, monomer.

The protein resides in the cytoplasm. IF-3 binds to the 30S ribosomal subunit and shifts the equilibrium between 70S ribosomes and their 50S and 30S subunits in favor of the free subunits, thus enhancing the availability of 30S subunits on which protein synthesis initiation begins. The sequence is that of Translation initiation factor IF-3 from Prochlorococcus marinus (strain AS9601).